Here is a 402-residue protein sequence, read N- to C-terminus: MTSPRVNLLDFDADQMAAYVAGLNEKPFRAKQLMQWIHQRGVSDINDMSDLAKSFRATLLDKVEVLSLPVIKDEHATDGTRKWLLDVGAGNAVESVFIPEDDRGTLCISSQAGCAVNCRFCSTGRQGFSRNLTSGEIIGQLWFAEHLLRNDPEAIRRIEKYPTPGWEHTGRVISNVVMMGMGEPLLNYDNVVSALRLMLDDRAYGLSRRRVTVSTSGVVPMIDRLAQDCPVALAVSLHAPNDALRDQLVPLNQKYPLRELLDACERYLPFAPRDFLTFEYCMLDGVNDSDIQAKELVRLLRNIKCKINLIPFNPFPESGLKRSSAQRVNAFAGILLDAGMVATVRKTRGDDIAAACGQLAGDVVDRTRVRERDIHSAEIEIAEVESDVQPNEQPIEWLKKLT.

Glutamate 94 functions as the Proton acceptor in the catalytic mechanism. Residues glutamate 100 to aspartate 351 form the Radical SAM core domain. Residues cysteine 107 and cysteine 356 are joined by a disulfide bond. The [4Fe-4S] cluster site is built by cysteine 114, cysteine 118, and cysteine 121. Residues glycine 182 to glutamate 183, serine 214, serine 236 to histidine 238, and asparagine 313 contribute to the S-adenosyl-L-methionine site. The active-site S-methylcysteine intermediate is cysteine 356.

Belongs to the radical SAM superfamily. RlmN family. Requires [4Fe-4S] cluster as cofactor.

The protein localises to the cytoplasm. The catalysed reaction is adenosine(2503) in 23S rRNA + 2 reduced [2Fe-2S]-[ferredoxin] + 2 S-adenosyl-L-methionine = 2-methyladenosine(2503) in 23S rRNA + 5'-deoxyadenosine + L-methionine + 2 oxidized [2Fe-2S]-[ferredoxin] + S-adenosyl-L-homocysteine. The enzyme catalyses adenosine(37) in tRNA + 2 reduced [2Fe-2S]-[ferredoxin] + 2 S-adenosyl-L-methionine = 2-methyladenosine(37) in tRNA + 5'-deoxyadenosine + L-methionine + 2 oxidized [2Fe-2S]-[ferredoxin] + S-adenosyl-L-homocysteine. In terms of biological role, specifically methylates position 2 of adenine 2503 in 23S rRNA and position 2 of adenine 37 in tRNAs. m2A2503 modification seems to play a crucial role in the proofreading step occurring at the peptidyl transferase center and thus would serve to optimize ribosomal fidelity. This chain is Dual-specificity RNA methyltransferase RlmN, found in Polynucleobacter asymbioticus (strain DSM 18221 / CIP 109841 / QLW-P1DMWA-1) (Polynucleobacter necessarius subsp. asymbioticus).